The following is a 280-amino-acid chain: uncharacterized protein (280 aa).

6 helical membrane passes run 3–23, 52–72, 81–101, 123–143, 196–216, and 233–253; these read ILIT…GMYI, FGLF…GSIV, INGL…NLQI, NWLV…LILL, FADI…IIIG, and IFAC…LLHI.

It is found in the cell membrane. This is an uncharacterized protein from Rickettsia prowazekii (strain Madrid E).